Reading from the N-terminus, the 154-residue chain is MTHYEGDLRPTTARFAIIASRWNARITDVLVAGARQSLAGNGIGEDAIDVIRVPGAWEIPIAANRVAQSGQHGAIIALGCVIRGDTRHYEHVADLCAEGLMSVQLQTGVPVLNGVLAVERVEDAEARAGGSHGNKGEECALAALELVNLMELLP.

Residues tryptophan 22, 56-58, and 80-82 each bind 5-amino-6-(D-ribitylamino)uracil; these read AWE and CVI. A (2S)-2-hydroxy-3-oxobutyl phosphate-binding site is contributed by 85–86; that stretch reads DT. Histidine 88 acts as the Proton donor in catalysis. Asparagine 113 serves as a coordination point for 5-amino-6-(D-ribitylamino)uracil. Arginine 127 provides a ligand contact to (2S)-2-hydroxy-3-oxobutyl phosphate.

The protein belongs to the DMRL synthase family. In terms of assembly, forms an icosahedral capsid composed of 60 subunits, arranged as a dodecamer of pentamers.

The catalysed reaction is (2S)-2-hydroxy-3-oxobutyl phosphate + 5-amino-6-(D-ribitylamino)uracil = 6,7-dimethyl-8-(1-D-ribityl)lumazine + phosphate + 2 H2O + H(+). It participates in cofactor biosynthesis; riboflavin biosynthesis; riboflavin from 2-hydroxy-3-oxobutyl phosphate and 5-amino-6-(D-ribitylamino)uracil: step 1/2. Its function is as follows. Catalyzes the formation of 6,7-dimethyl-8-ribityllumazine by condensation of 5-amino-6-(D-ribitylamino)uracil with 3,4-dihydroxy-2-butanone 4-phosphate. This is the penultimate step in the biosynthesis of riboflavin. This is 6,7-dimethyl-8-ribityllumazine synthase from Xanthomonas axonopodis pv. citri (strain 306).